The sequence spans 705 residues: 1,4-alpha-glucan branching enzyme GlgB (705 aa).

Residue Asp393 is the Nucleophile of the active site. Glu446 serves as the catalytic Proton donor.

This sequence belongs to the glycosyl hydrolase 13 family. GlgB subfamily. Monomer.

It catalyses the reaction Transfers a segment of a (1-&gt;4)-alpha-D-glucan chain to a primary hydroxy group in a similar glucan chain.. It functions in the pathway glycan biosynthesis; glycogen biosynthesis. Functionally, catalyzes the formation of the alpha-1,6-glucosidic linkages in glycogen by scission of a 1,4-alpha-linked oligosaccharide from growing alpha-1,4-glucan chains and the subsequent attachment of the oligosaccharide to the alpha-1,6 position. The sequence is that of 1,4-alpha-glucan branching enzyme GlgB from Picrophilus torridus (strain ATCC 700027 / DSM 9790 / JCM 10055 / NBRC 100828 / KAW 2/3).